A 448-amino-acid chain; its full sequence is MSKKIVTIIDVKNYVGQEVTIGAWVANKSGKGKIAFLQLRDGSAFFQGVAFKPNFIEKFGEEEGLAKFDTIKKLSQETSVYVTGVVKEDERSKFGYELDITDIEIIGESNDYPITPKEHGTDFLMDNRHLWLRSRKQVAMMQIRNAIIYATYEFFDKNGFMKFDSPILSGNAAEDSTELFETDYFGTPAYLSQSGQLYLEAGAMALGRVFDFGPVFRAEKSKTRRHLTEFWMMDAEYSYLTHDESLDLQEAYVKALIQGVLDRAPQALETLERDVELLKRYIAEPFKRVSYDEAIDLLQAHENDEDADYEHLEHGDDFGSPHETWISNHFGVPTFVVNYPAAIKAFYMKPVPGNPDRVLCADLLAPEGYGEIIGGSMREEDYDALVAKMNDLGMDTTEYEFYLDLRKYGTVPHGGFGIGIERMVTFVAGTKHIREAIPFPRMLHRIKP.

This sequence belongs to the class-II aminoacyl-tRNA synthetase family. In terms of assembly, homodimer.

Its subcellular location is the cytoplasm. The catalysed reaction is tRNA(Asn) + L-asparagine + ATP = L-asparaginyl-tRNA(Asn) + AMP + diphosphate + H(+). The protein is Asparagine--tRNA ligase of Streptococcus sanguinis (strain SK36).